We begin with the raw amino-acid sequence, 47 residues long: PhoP/PhoQ regulator MgrB (47 aa).

A helical transmembrane segment spans residues 6-26 (WLVLIVVVLACLVLWAQVINI).

Belongs to the MgrB family. May form homooligomers. Probably interacts with the periplasmic domain of PhoQ.

The protein resides in the cell inner membrane. PhoP-regulated transcription is redox-sensitive, being activated when the periplasm becomes more reducing. MgrB acts between DsbA/DsbB and PhoP/PhoQ in this pathway. Represses PhoP/PhoQ signaling, possibly by binding to the periplasmic domain of PhoQ, altering its activity and that of downstream effector PhoP. The sequence is that of PhoP/PhoQ regulator MgrB from Escherichia fergusonii (strain ATCC 35469 / DSM 13698 / CCUG 18766 / IAM 14443 / JCM 21226 / LMG 7866 / NBRC 102419 / NCTC 12128 / CDC 0568-73).